Consider the following 142-residue polypeptide: Large ribosomal subunit protein uL11 (142 aa).

Belongs to the universal ribosomal protein uL11 family. In terms of assembly, part of the ribosomal stalk of the 50S ribosomal subunit. Interacts with L10 and the large rRNA to form the base of the stalk. L10 forms an elongated spine to which L12 dimers bind in a sequential fashion forming a multimeric L10(L12)X complex. Post-translationally, one or more lysine residues are methylated.

Its function is as follows. Forms part of the ribosomal stalk which helps the ribosome interact with GTP-bound translation factors. This is Large ribosomal subunit protein uL11 from Rhodopseudomonas palustris (strain BisB5).